Consider the following 85-residue polypeptide: U4-theraphotoxin-Hhn1d (85 aa).

The first 22 residues, 1-22, serve as a signal peptide directing secretion; the sequence is MKVTLIAILTCAAVLVLHTTAA. Residues 23 to 48 constitute a propeptide that is removed on maturation; that stretch reads EELEAESQLMEVGMPDTELAAVDEER. Cystine bridges form between cysteine 52/cysteine 66, cysteine 56/cysteine 77, and cysteine 71/cysteine 82.

The protein belongs to the neurotoxin 12 (Hwtx-2) family. 02 (Hwtx-2) subfamily. As to expression, expressed by the venom gland.

The protein resides in the secreted. Its function is as follows. Postsynaptic neurotoxin. The sequence is that of U4-theraphotoxin-Hhn1d from Cyriopagopus hainanus (Chinese bird spider).